The sequence spans 416 residues: 3-isopropylmalate dehydratase large subunit 2 (416 aa).

The [4Fe-4S] cluster site is built by cysteine 296, cysteine 356, and cysteine 359.

The protein belongs to the aconitase/IPM isomerase family. LeuC type 2 subfamily. Heterodimer of LeuC and LeuD. The cofactor is [4Fe-4S] cluster.

It catalyses the reaction (2R,3S)-3-isopropylmalate = (2S)-2-isopropylmalate. It functions in the pathway amino-acid biosynthesis; L-leucine biosynthesis; L-leucine from 3-methyl-2-oxobutanoate: step 2/4. In terms of biological role, catalyzes the isomerization between 2-isopropylmalate and 3-isopropylmalate, via the formation of 2-isopropylmaleate. The protein is 3-isopropylmalate dehydratase large subunit 2 of Archaeoglobus fulgidus (strain ATCC 49558 / DSM 4304 / JCM 9628 / NBRC 100126 / VC-16).